Reading from the N-terminus, the 608-residue chain is Albumin (608 aa).

The first 18 residues, 1–18 (MKWVTFISLFFLFSSAYS), serve as a signal peptide directing secretion. Positions 19–24 (RGLVRR) are excised as a propeptide. 3 consecutive Albumin domains span residues 19–210 (RGLV…EALR), 211–403 (EKVL…EFKP), and 404–601 (LVDE…KLVA). The residue at position 29 (Ser29) is a Phosphoserine. 2 residues coordinate Ca(2+): Glu30 and Asp37. Residues Cys77 and Cys86 are joined by a disulfide bond. Ser82 and Ser89 each carry phosphoserine. His91 provides a ligand contact to Zn(2+). Intrachain disulfides connect Cys99/Cys115, Cys114/Cys125, Cys148/Cys193, Cys192/Cys201, Cys224/Cys270, and Cys269/Cys277. Residue Lys229 is modified to N6-succinyllysine. Residue Glu268 coordinates Ca(2+). Zn(2+) contacts are provided by His271 and Asp273. Residues Asp273, Glu276, Asp279, and Asp283 each coordinate Ca(2+). 8 cysteine pairs are disulfide-bonded: Cys289-Cys303, Cys302-Cys313, Cys340-Cys385, Cys384-Cys393, Cys416-Cys462, Cys461-Cys472, Cys485-Cys501, and Cys500-Cys511. Phosphoserine is present on Ser443. Thr444 and Thr446 each carry phosphothreonine. Position 460 is an N6-succinyllysine (Lys460). The residue at position 513 (Ser513) is a Phosphoserine. Intrachain disulfides connect Cys538–Cys583 and Cys582–Cys591. Lys558 carries the post-translational modification N6-methyllysine. Position 570 is a phosphothreonine (Thr570). Residue Lys588 is modified to N6-succinyllysine.

The protein belongs to the ALB/AFP/VDB family. As to quaternary structure, interacts with FCGRT; this interaction regulates ALB homeostasis. Interacts with TASOR. In plasma, occurs in a covalently-linked complex with chromophore-bound alpha-1-microglobulin; this interaction does not prevent fatty acid binding to ALB. Post-translationally, phosphorylated by FAM20C in the extracellular medium. As to expression, plasma.

It is found in the secreted. In terms of biological role, binds water, Ca(2+), Na(+), K(+), fatty acids, hormones, bilirubin and drugs. Its main function is the regulation of the colloidal osmotic pressure of blood. Major zinc transporter in plasma, typically binds about 80% of all plasma zinc. Major calcium and magnesium transporter in plasma, binds approximately 45% of circulating calcium and magnesium in plasma. Potentially has more than two calcium-binding sites and might additionally bind calcium in a non-specific manner. The shared binding site between zinc and calcium at residue Asp-273 suggests a crosstalk between zinc and calcium transport in the blood. The rank order of affinity is zinc &gt; calcium &gt; magnesium. Binds to the bacterial siderophore enterobactin and inhibits enterobactin-mediated iron uptake of E.coli from ferric transferrin, and may thereby limit the utilization of iron and growth of enteric bacteria such as E.coli. Does not prevent iron uptake by the bacterial siderophore aerobactin. The chain is Albumin (ALB) from Canis lupus familiaris (Dog).